The following is a 1063-amino-acid chain: MALQVELIPTGEIIRVVHPHRPCKLALGSDGVRVTMESALTARDRVGVQDFVLLENFTSEAAFIENLRRRFRENLIYTYIGPVLVSVNPYRDLQIYSRQHMERYRGVSFYEVPPHLFAVADTVYRALRTERRDQAVMISGESGAGKTEATKRLLQFYAETCPAPERGGAVRDRLLQSNPVLEAFGNAKTLRNDNSSRFGKYMDVQFDFKGAPVGGHILSYLLEKSRVVHQNHGERNFHVFYQLLEGGEEETLRRLGLERNPQSYLYLVKGQCAKVSSINDKSDWKVMRKALSVIDFTEDEVEDLLSIVASVLHLGNIHFAADEDSNAQVTTENQLKYLTRLLGVEGTTLREALTHRKIIAKGEELLSPLNLEQAAYARDALAKAVYSRTFTWLVRKINRSLASKDAESPSWRSTTVLGLLDIYGFEVFQHNSFEQFCINYCNEKLQQLFIELTLKSEQEEYEAEGIAWEPVQYFNNKIICDLVEEKFKGIISILDEECLRPGEATDLTFLEKLEDTVKPHPHFLTHKLADQKTRKSLDRGEFRLLHYAGEVTYSVTGFLDKNNDLLFRNLKETMCSSMNPIMAQCFDKSELSDKKRPETVATQFKMSLLQLVEILRSKEPAYIRCIKPNDAKQPGRFDEVLIRHQVKYLGLMENLRVRRAGFAYRRKYEAFLQRYKSLCPETWPMWAGRPQDGVAVLVRHLGYKPEEYKMGRTKIFIRFPKTLFATEDSLEVRRQSLATKIQAAWRGFHWRQKFLRVKRSAICIQSWWRGTLGRRKAAKRKWAAQTIRRLIRGFILRHSPRCPENAFFLDHVRASFLLNLRRQLPRNVLDTSWPTPPPALREASELLRELCMKNMVWKYCRSISPEWKQQLQQKAVASEIFKGKKDNYPQSVPRLFISTRLGTEEISPRVLQSLGSEPIQYAVPVVKYDRKGYKPRPRQLLLTPSAVVIVEDAKVKQRIDYANLTGISVSSLSDSLFVLHVQREDNKQKGDVVLQSDHVIETLTKTALSADRVNNININQGSITFAGGPGRDGIIDFTSGSELLITKAKNGHLAVVAPRLNSR.

M1 bears the N-acetylmethionine mark. T10 bears the Phosphoserine mark. In terms of domain architecture, Myosin motor spans 47-731 (GVQDFVLLEN…TLFATEDSLE (685 aa)). Residues N88, Y96, 139–148 (SGESGAGKTE), and 192–196 (NDNSS) contribute to the ATP site. At K383 the chain carries N6-methyllysine. S408 carries the phosphoserine modification. Position 486 is an N6-acetyllysine (K486). A Phosphoserine modification is found at S536. The interval 608–630 (LLQLVEILRSKEPAYIRCIKPND) is actin-binding. IQ domains follow at residues 734 to 757 (RQSL…FLRV) and 758 to 786 (KRSA…AAQT). Residues S864 and S1041 each carry the phosphoserine modification. Residues 885–1059 (KDNYPQSVPR…NGHLAVVAPR (175 aa)) enclose the TH1 domain.

The protein belongs to the TRAFAC class myosin-kinesin ATPase superfamily. Myosin family. Interacts (via its IQ motifs) with CABP1 and CIB1; the interaction with CABP1 and CIB1 is calcium-dependent. Interacts (via tail domain) with PLEKHB1 (via PH domain); the interaction is not affected by the presence or absence of calcium and CALM. Interacts with POLR1A. Interacts with POLR2A. Component of the B-WICH complex, at least composed of SMARCA5/SNF2H, BAZ1B/WSTF, SF3B1, DEK, MYO1C, ERCC6, MYBBP1A and DDX21. Interacts (via its IQ motifs) with CALM; this precludes interaction with YWHAB. Interacts with YWHAB; this precludes interaction with CALM. Interacts with RPS6. Interacts with actin. Interacts with LLPH. Interacts with GLUT4. Interacts (via its IQ motifs) with SH3BGRL3; the interaction is dependent on calcium and takes place at membrane ruffles. Isoform 2 contains a N-acetylmethionine at position 1. As to expression, isoform 3 is expressed in small intestine, pancreas, brain, kidney, skin, heart muscle, testis, striated muscle, spleen, liver and lung (at protein level). Expressed in brain, testis, adrenal glands, thymus, spleen, kidney, lung, heart, cochlea and vestibule. Expressed in sensory hair cells of the inner ear. Expressed in adipocytes.

It localises to the cytoplasm. The protein resides in the nucleus. It is found in the cell cortex. The protein localises to the cell projection. Its subcellular location is the stereocilium membrane. It localises to the cytoplasmic vesicle. The protein resides in the ruffle membrane. It is found in the nucleolus. The protein localises to the nucleoplasm. In terms of biological role, myosins are actin-based motor molecules with ATPase activity. Unconventional myosins serve in intracellular movements. Their highly divergent tails bind to membranous compartments, which then are moved relative to actin filaments. Involved in glucose transporter recycling in response to insulin by regulating movement of intracellular GLUT4-containing vesicles to the plasma membrane. Component of the hair cell's (the sensory cells of the inner ear) adaptation-motor complex. Acts as a mediator of adaptation of mechanoelectrical transduction in stereocilia of vestibular hair cells. Binds phosphoinositides and links the actin cytoskeleton to cellular membranes. Its function is as follows. Involved in regulation of transcription. Associated with transcriptional active ribosomal genes. Appears to cooperate with the WICH chromatin-remodeling complex to facilitate transcription. Necessary for the formation of the first phosphodiester bond during transcription initiation. This is Unconventional myosin-Ic (Myo1c) from Mus musculus (Mouse).